The following is a 616-amino-acid chain: Dihydroxy-acid dehydratase (616 aa).

Aspartate 81 serves as a coordination point for Mg(2+). Residue cysteine 122 participates in [2Fe-2S] cluster binding. Mg(2+) is bound by residues aspartate 123 and lysine 124. At lysine 124 the chain carries N6-carboxylysine. Cysteine 195 lines the [2Fe-2S] cluster pocket. Glutamate 491 contacts Mg(2+). The Proton acceptor role is filled by serine 517.

Belongs to the IlvD/Edd family. Homodimer. The cofactor is [2Fe-2S] cluster. It depends on Mg(2+) as a cofactor.

It carries out the reaction (2R)-2,3-dihydroxy-3-methylbutanoate = 3-methyl-2-oxobutanoate + H2O. It catalyses the reaction (2R,3R)-2,3-dihydroxy-3-methylpentanoate = (S)-3-methyl-2-oxopentanoate + H2O. It participates in amino-acid biosynthesis; L-isoleucine biosynthesis; L-isoleucine from 2-oxobutanoate: step 3/4. Its pathway is amino-acid biosynthesis; L-valine biosynthesis; L-valine from pyruvate: step 3/4. Its function is as follows. Functions in the biosynthesis of branched-chain amino acids. Catalyzes the dehydration of (2R,3R)-2,3-dihydroxy-3-methylpentanoate (2,3-dihydroxy-3-methylvalerate) into 2-oxo-3-methylpentanoate (2-oxo-3-methylvalerate) and of (2R)-2,3-dihydroxy-3-methylbutanoate (2,3-dihydroxyisovalerate) into 2-oxo-3-methylbutanoate (2-oxoisovalerate), the penultimate precursor to L-isoleucine and L-valine, respectively. The chain is Dihydroxy-acid dehydratase from Salmonella paratyphi C (strain RKS4594).